Reading from the N-terminus, the 342-residue chain is (+)-pulegone reductase (342 aa).

NADP(+)-binding positions include 163–166 (GSVG), Lys189, Tyr205, Asn229, 251–257 (CGMVSQY), 281–283 (FVV), and Asn331.

Belongs to the NADP-dependent oxidoreductase L4BD family.

It localises to the cytoplasm. The catalysed reaction is (2R,5R)-isomenthone + NADP(+) = (R)-pulegone + NADPH + H(+). It catalyses the reaction (1R,4S)-menthone + NADP(+) = (R)-pulegone + NADPH + H(+). The protein operates within secondary metabolite biosynthesis; terpenoid biosynthesis. Not inhibited by (+)-menthofuran. Functionally, monoterpene synthase that catalyzes the specific reduction of the 4,8-double bond of (+)-pulegone to produce both (-)-menthone and (+)-isomenthone in a 70:30 ratio. Unable to utilize either (-)-isopiperitenone or (+)-cis-isopulegone, or to catalyze the reverse reaction with (-)-menthone or (+)-isomenthone. Has an absolute requirement for NADPH. This Mentha piperita (Peppermint) protein is (+)-pulegone reductase.